Reading from the N-terminus, the 110-residue chain is UPF0122 protein SP70585_1353 (110 aa).

This sequence belongs to the UPF0122 family.

In terms of biological role, might take part in the signal recognition particle (SRP) pathway. This is inferred from the conservation of its genetic proximity to ftsY/ffh. May be a regulatory protein. The sequence is that of UPF0122 protein SP70585_1353 from Streptococcus pneumoniae (strain 70585).